Reading from the N-terminus, the 167-residue chain is SsrA-binding protein (167 aa).

Basic and acidic residues predominate over residues 139–158 (QNHDKRDAAKDRDWQRDKQR). A disordered region spans residues 139–167 (QNHDKRDAAKDRDWQRDKQRVMRRHNRDA).

Belongs to the SmpB family.

Its subcellular location is the cytoplasm. In terms of biological role, required for rescue of stalled ribosomes mediated by trans-translation. Binds to transfer-messenger RNA (tmRNA), required for stable association of tmRNA with ribosomes. tmRNA and SmpB together mimic tRNA shape, replacing the anticodon stem-loop with SmpB. tmRNA is encoded by the ssrA gene; the 2 termini fold to resemble tRNA(Ala) and it encodes a 'tag peptide', a short internal open reading frame. During trans-translation Ala-aminoacylated tmRNA acts like a tRNA, entering the A-site of stalled ribosomes, displacing the stalled mRNA. The ribosome then switches to translate the ORF on the tmRNA; the nascent peptide is terminated with the 'tag peptide' encoded by the tmRNA and targeted for degradation. The ribosome is freed to recommence translation, which seems to be the essential function of trans-translation. The chain is SsrA-binding protein from Xanthomonas axonopodis pv. citri (strain 306).